The primary structure comprises 407 residues: E3 ubiquitin-protein ligase TRIM13 (407 aa).

Residues 10 to 58 form an RING-type zinc finger; it reads CPICCSLFDDPRVLPCSHNFCKKCLEGLLEGNVRNSLWRPSPFKCPTCR. Residues 89–131 form a B box-type zinc finger; that stretch reads PKMPVCKEHLGQPLNIFCVTDMQLICGVCATRGSHTKHVFSSI. Cysteine 94, histidine 97, cysteine 117, and histidine 123 together coordinate Zn(2+). Residues 172 to 200 adopt a coiled-coil conformation; that stretch reads LQLLTKDSDKVKEFFEKLQHTLDQKKNEI. The chain crosses the membrane as a helical span at residues 316-336; sequence LLLMAVVLLGLLVFFGPTVFL.

As to quaternary structure, interacts (via C-terminal domain) with VCP. Interacts with AKT1; the interaction ubiquitinates AKT1 and leads to its proteasomal degradation. Interacts with MDM2; the interaction ubiquitinates AKT1 and leads to its proteasomal degradation. Interacts with p62/SQSTM1. Interacts with TRAF6. Interacts with IKBKG/NEMO. Post-translationally, auto-ubiquitinated; requires the RING-type zinc finger. Auto-polyubiquitination leads to proteasomal degradation.

The protein resides in the endoplasmic reticulum membrane. It carries out the reaction S-ubiquitinyl-[E2 ubiquitin-conjugating enzyme]-L-cysteine + [acceptor protein]-L-lysine = [E2 ubiquitin-conjugating enzyme]-L-cysteine + N(6)-ubiquitinyl-[acceptor protein]-L-lysine.. Its pathway is protein modification; protein ubiquitination. Functionally, endoplasmic reticulum (ER) membrane anchored E3 ligase involved in the retrotranslocation and turnover of membrane and secretory proteins from the ER through a set of processes named ER-associated degradation (ERAD). This process acts on misfolded proteins as well as in the regulated degradation of correctly folded proteins. Enhances ionizing radiation-induced p53/TP53 stability and apoptosis via ubiquitinating MDM2 and AKT1 and decreasing AKT1 kinase activity through MDM2 and AKT1 proteasomal degradation. Regulates ER stress-induced autophagy, and may act as a tumor suppressor. Also plays a role in innate immune response by stimulating NF-kappa-B activity in the TLR2 signaling pathway. Ubiquitinates TRAF6 via the 'Lys-29'-linked polyubiquitination chain resulting in NF-kappa-B activation. Participates as well in T-cell receptor-mediated NF-kappa-B activation. In the presence of TNF, modulates the IKK complex by regulating IKBKG/NEMO ubiquitination leading to the repression of NF-kappa-B. This chain is E3 ubiquitin-protein ligase TRIM13 (Trim13), found in Rattus norvegicus (Rat).